The chain runs to 72 residues: Translation initiation factor IF-1 (72 aa).

Residues 1-72 (MAKEGAIEVE…TRGRIVYRYK (72 aa)) enclose the S1-like domain.

This sequence belongs to the IF-1 family. As to quaternary structure, component of the 30S ribosomal translation pre-initiation complex which assembles on the 30S ribosome in the order IF-2 and IF-3, IF-1 and N-formylmethionyl-tRNA(fMet); mRNA recruitment can occur at any time during PIC assembly.

It is found in the cytoplasm. In terms of biological role, one of the essential components for the initiation of protein synthesis. Stabilizes the binding of IF-2 and IF-3 on the 30S subunit to which N-formylmethionyl-tRNA(fMet) subsequently binds. Helps modulate mRNA selection, yielding the 30S pre-initiation complex (PIC). Upon addition of the 50S ribosomal subunit IF-1, IF-2 and IF-3 are released leaving the mature 70S translation initiation complex. The polypeptide is Translation initiation factor IF-1 (Corynebacterium efficiens (strain DSM 44549 / YS-314 / AJ 12310 / JCM 11189 / NBRC 100395)).